Reading from the N-terminus, the 345-residue chain is Ubiquinone biosynthesis O-methyltransferase, mitochondrial (345 aa).

Residues 1-86 (MWRGGRLSSR…TYRSSWKKLY (86 aa)) constitute a mitochondrion transit peptide. Residue R124 participates in S-adenosyl-L-methionine binding. N6-acetyllysine is present on residues K143 and K149. G154 and D175 together coordinate S-adenosyl-L-methionine. K196 is modified (N6-acetyllysine). Residue S222 coordinates S-adenosyl-L-methionine. Residues E223, E226, and H227 each contribute to the Mg(2+) site.

The protein belongs to the class I-like SAM-binding methyltransferase superfamily. UbiG/COQ3 family. As to quaternary structure, component of a multi-subunit COQ enzyme complex, composed of at least COQ3, COQ4, COQ5, COQ6, COQ7 and COQ9. Mg(2+) serves as cofactor.

It localises to the mitochondrion inner membrane. It catalyses the reaction 3,4-dihydroxy-5-(all-trans-decaprenyl)benzoate + S-adenosyl-L-methionine = 4-hydroxy-3-methoxy-5-(all-trans-decaprenyl)benzoate + S-adenosyl-L-homocysteine + H(+). The enzyme catalyses a 3-demethylubiquinone + S-adenosyl-L-methionine = a ubiquinone + S-adenosyl-L-homocysteine. It carries out the reaction 3-demethylubiquinol-10 + S-adenosyl-L-methionine = ubiquinol-10 + S-adenosyl-L-homocysteine + H(+). It participates in cofactor biosynthesis; ubiquinone biosynthesis. Functionally, O-methyltransferase required for two non-consecutive steps during ubiquinone biosynthesis. Catalyzes the 2 O-methylation of 3,4-dihydroxy-5-(all-trans-decaprenyl)benzoic acid into 4-hydroxy-3-methoxy-5-(all-trans-decaprenyl)benzoic acid. Also catalyzes the last step of ubiquinone biosynthesis by mediating methylation of 3-demethylubiquinone into ubiquinone. Also able to mediate the methylation of 3-demethylubiquinol-10 into ubiquinol-10. The protein is Ubiquinone biosynthesis O-methyltransferase, mitochondrial of Rattus norvegicus (Rat).